Here is a 343-residue protein sequence, read N- to C-terminus: Anthranilate phosphoribosyltransferase (343 aa).

Residues Gly-78, 81–82 (GD), Thr-86, 88–91 (NIST), 106–114 (KHGNRSVSS), and Ser-118 contribute to the 5-phospho-alpha-D-ribose 1-diphosphate site. Gly-78 is a binding site for anthranilate. Mg(2+) is bound at residue Ser-90. Residue Asn-109 coordinates anthranilate. Arg-164 provides a ligand contact to anthranilate. Mg(2+) contacts are provided by Asp-223 and Glu-224.

The protein belongs to the anthranilate phosphoribosyltransferase family. In terms of assembly, homodimer. Mg(2+) is required as a cofactor.

The catalysed reaction is N-(5-phospho-beta-D-ribosyl)anthranilate + diphosphate = 5-phospho-alpha-D-ribose 1-diphosphate + anthranilate. It participates in amino-acid biosynthesis; L-tryptophan biosynthesis; L-tryptophan from chorismate: step 2/5. Catalyzes the transfer of the phosphoribosyl group of 5-phosphorylribose-1-pyrophosphate (PRPP) to anthranilate to yield N-(5'-phosphoribosyl)-anthranilate (PRA). This Chlamydia felis (strain Fe/C-56) (Chlamydophila felis) protein is Anthranilate phosphoribosyltransferase.